The chain runs to 75 residues: Large ribosomal subunit protein bL31 (75 aa).

The protein belongs to the bacterial ribosomal protein bL31 family. Type A subfamily. In terms of assembly, part of the 50S ribosomal subunit.

Binds the 23S rRNA. This is Large ribosomal subunit protein bL31 from Gluconobacter oxydans (strain 621H) (Gluconobacter suboxydans).